A 525-amino-acid polypeptide reads, in one-letter code: GMP synthase [glutamine-hydrolyzing] (525 aa).

Residues 8–207 enclose the Glutamine amidotransferase type-1 domain; it reads KILILDFGSQ…ALDICGCAAN (200 aa). Cys-85 serves as the catalytic Nucleophile. Catalysis depends on residues His-181 and Glu-183. The GMPS ATP-PPase domain maps to 208-400; sequence WKPSSIIEDA…LGLPYNMLYR (193 aa). 235–241 contributes to the ATP binding site; sequence SGGVDSS.

In terms of assembly, homodimer.

It catalyses the reaction XMP + L-glutamine + ATP + H2O = GMP + L-glutamate + AMP + diphosphate + 2 H(+). The protein operates within purine metabolism; GMP biosynthesis; GMP from XMP (L-Gln route): step 1/1. Catalyzes the synthesis of GMP from XMP. The chain is GMP synthase [glutamine-hydrolyzing] from Shewanella baltica (strain OS223).